Consider the following 212-residue polypeptide: Nitrogen regulatory protein P-II homolog (212 aa).

3 stretches are compositionally biased toward low complexity: residues 1-12, 32-46, and 63-74; these read MSSPATAAAAAA, TTTTTSRLLLASRSR, and PPTAARAQSAAA. The transit peptide at 1–68 directs the protein to the chloroplast; the sequence is MSSPATAAAA…PRRLPPTAAR (68 aa). Residues 1–74 are disordered; sequence MSSPATAAAA…TAARAQSAAA (74 aa). ATP is bound by residues 117-121 and 170-173; these read GFGAQ and GDGK. Gly119 is a binding site for Mg(2+).

It belongs to the P(II) protein family. As to quaternary structure, homodimer.

The protein resides in the plastid. It localises to the chloroplast. Functionally, participates in sensing carbon and organic nitrogen status and regulates some steps of primary carbon and nitrogen metabolism. This chain is Nitrogen regulatory protein P-II homolog (GLB), found in Oryza sativa subsp. japonica (Rice).